The chain runs to 511 residues: Cytochrome P450 4B1 (511 aa).

2 residues coordinate heme: Glu315 and Cys453.

Belongs to the cytochrome P450 family. The cofactor is heme.

It localises to the endoplasmic reticulum membrane. The protein resides in the microsome membrane. It carries out the reaction an organic molecule + reduced [NADPH--hemoprotein reductase] + O2 = an alcohol + oxidized [NADPH--hemoprotein reductase] + H2O + H(+). In terms of biological role, cytochromes P450 are a group of heme-thiolate monooxygenases. In liver microsomes, this enzyme is involved in an NADPH-dependent electron transport pathway. It oxidizes a variety of structurally unrelated compounds, including steroids, fatty acids, and xenobiotics. In Rattus norvegicus (Rat), this protein is Cytochrome P450 4B1 (Cyp4b1).